Here is a 58-residue protein sequence, read N- to C-terminus: Amyloid-beta precursor protein (58 aa).

Residues 1-34 (ISEVKMDAEFRHDSGYEVHHQKLVFFAEDVGSNK) lie on the Extracellular side of the membrane. Cu(2+) is bound by residues histidine 12, tyrosine 16, histidine 19, and histidine 20. 4 residues coordinate Zn(2+): histidine 12, tyrosine 16, histidine 19, and histidine 20. A helical transmembrane segment spans residues 35 to 58 (GAIIGLMVGGVVIATVIVITLVML).

Belongs to the APP family. Binds, via its C-terminus, to the PID domain of several cytoplasmic proteins, including APBB family members, the APBA family, MAPK8IP1, SHC1 and NUMB and DAB1. Binding to DAB1 inhibits its serine phosphorylation. Interacts (via NPXY motif) with DAB2 (via PID domain); the interaction is impaired by tyrosine phosphorylation of the NPXY motif. Also interacts with GPCR-like protein BPP, APPBP1, IB1, KNS2 (via its TPR domains), APPBP2 (via BaSS) and DDB1. In vitro, it binds MAPT via the MT-binding domains. Associates with microtubules in the presence of ATP and in a kinesin-dependent manner. Interacts, through a C-terminal domain, with GNAO1. Interacts with CPEB1, ANKS1B and AGER. Interacts with ITM2B. Interacts with ITM2C. Interacts with IDE. Can form homodimers; dimerization is enhanced in the presence of Cu(2+) ions. Can form homodimers; this is promoted by heparin binding. Interacts with SORL1 (via N-terminal ectodomain); this interaction retains APP in the trans-Golgi network and reduces processing into soluble APP-alpha and amyloid-beta peptides. Interacts with PLD3. Interacts with VDAC1. Interacts with NSG1; could regulate APP processing. Amyloid-beta protein 42 interacts with FPR2. Interacts with LRRK2. Interacts (via cytoplasmic domain) with KIF5B. Interacts (via C-terminus) with APBB2/FE65L1 (via C-terminus). Interacts (via intracellular domain) with APBB3. In terms of processing, proteolytically processed under normal cellular conditions. Cleavage either by alpha-secretase, beta-secretase or theta-secretase leads to generation and extracellular release of soluble APP peptides, S-APP-alpha and S-APP-beta, and the retention of corresponding membrane-anchored C-terminal fragments, C80, C83 and C99. Subsequent processing of C80 and C83 by gamma-secretase yields P3 peptides. This is the major secretory pathway and is non-amyloidogenic. Alternatively, presenilin/nicastrin-mediated gamma-secretase processing of C99 releases the amyloid-beta proteins, amyloid-beta protein 40 and amyloid-beta protein 42, major components of amyloid plaques, and the cytotoxic C-terminal fragments, gamma-CTF(50), gamma-CTF(57) and gamma-CTF(59). PSEN1 cleavage is more efficient with C83 than with C99 as substrate (in vitro). Amyloid-beta protein 40 and Amyloid-beta protein 42 are cleaved by ACE. Many other minor amyloid-beta peptides, amyloid-beta 1-X peptides, are found in cerebral spinal fluid (CSF) including the amyloid-beta X-15 peptides, produced from the cleavage by alpha-secretase.

The protein resides in the cell membrane. The protein localises to the membrane. Its subcellular location is the perikaryon. It is found in the cell projection. It localises to the growth cone. The protein resides in the clathrin-coated pit. The protein localises to the early endosome. Its subcellular location is the cytoplasmic vesicle. It is found in the secreted. It localises to the cell surface. The protein resides in the nucleus. The protein localises to the cytoplasm. In terms of biological role, functions as a cell surface receptor and performs physiological functions on the surface of neurons relevant to neurite growth, neuronal adhesion and axonogenesis. Interaction between APP molecules on neighboring cells promotes synaptogenesis. Involved in cell mobility and transcription regulation through protein-protein interactions. Can promote transcription activation through binding to APBB1-KAT5 and inhibit Notch signaling through interaction with Numb. Couples to apoptosis-inducing pathways such as those mediated by G(o) and JIP. Inhibits G(o)-alpha ATPase activity. Acts as a kinesin I membrane receptor, mediating the axonal transport of beta-secretase and presenilin 1. By acting as a kinesin I membrane receptor, plays a role in axonal anterograde transport of cargo towards synapses in axons. May be involved in copper homeostasis/oxidative stress through copper ion reduction. In vitro, copper-metallated APP induces neuronal death directly or is potentiated through Cu(2+)-mediated low-density lipoprotein oxidation. Can regulate neurite outgrowth through binding to components of the extracellular matrix such as heparin and collagen I and IV. Induces a AGER-dependent pathway that involves activation of p38 MAPK, resulting in internalization of amyloid-beta peptide and mitochondrial dysfunction in cultured cortical neurons. Provides Cu(2+) ions for GPC1 which are required for release of nitric oxide (NO) and subsequent degradation of the heparan sulfate chains on GPC1. The protein is Amyloid-beta precursor protein (APP) of Canis lupus familiaris (Dog).